The chain runs to 326 residues: Adenine deaminase (326 aa).

Residues His14, His16, and His194 each coordinate Zn(2+). Glu197 acts as the Proton donor in catalysis. Asp275 serves as a coordination point for Zn(2+). Asp276 lines the substrate pocket.

The protein belongs to the metallo-dependent hydrolases superfamily. Adenosine and AMP deaminases family. Adenine deaminase type 2 subfamily. Zn(2+) serves as cofactor.

It carries out the reaction adenine + H2O + H(+) = hypoxanthine + NH4(+). Functionally, catalyzes the hydrolytic deamination of adenine to hypoxanthine. Plays an important role in the purine salvage pathway and in nitrogen catabolism. This is Adenine deaminase from Crocosphaera subtropica (strain ATCC 51142 / BH68) (Cyanothece sp. (strain ATCC 51142)).